Consider the following 110-residue polypeptide: Protein C-ets-2 (110 aa).

The ETS DNA-binding region spans 1-84 (SGPIQLWQFL…AGKRYVYRFV (84 aa)).

The protein belongs to the ETS family.

The protein resides in the nucleus. Functionally, probable transcription factor. The sequence is that of Protein C-ets-2 (ETS-2) from Lytechinus variegatus (Green sea urchin).